The chain runs to 77 residues: MSDVAEKVKKIIVDQLGVSADEVKPEASFVEDLGADSLDLTELIMAMEEEFEVEIADEDAQKILKVQDAIAYIEEKK.

In terms of domain architecture, Carrier spans 2-77 (SDVAEKVKKI…DAIAYIEEKK (76 aa)). Ser-37 carries the O-(pantetheine 4'-phosphoryl)serine modification.

This sequence belongs to the acyl carrier protein (ACP) family. In terms of processing, 4'-phosphopantetheine is transferred from CoA to a specific serine of apo-ACP by AcpS. This modification is essential for activity because fatty acids are bound in thioester linkage to the sulfhydryl of the prosthetic group.

The protein resides in the cytoplasm. The protein operates within lipid metabolism; fatty acid biosynthesis. In terms of biological role, carrier of the growing fatty acid chain in fatty acid biosynthesis. In Desulfovibrio desulfuricans (strain ATCC 27774 / DSM 6949 / MB), this protein is Acyl carrier protein.